Reading from the N-terminus, the 613-residue chain is MASLSGLYSSSPSLKPAKNHSFKALPAQSRDSFSFPHTSKPTNLPLTLSSARSVARDISHADSKKELLKDPDALWKRYLDWFYQQKELGLYLDISRVGFTDEFVAEMEPRFQAAFKAMEDLEKGSIANPDEGRMVGHYWLRNSKLAPKPTLKTLIENTLDSICAFSDDIISGKIKPPSSPEGRFTQILSVGIGGSALGPQFVAEALAPDNPPLKIRFIDNTDPAGIDHQIAQLGPELASTLVVVISKSGGTPETRNGLLEVQKAFREAGLNFAKQGVAITQENSLLDNTARIEGWLARFPMYDWVGGRTSIMSAVGLLPAALQGINVREMLTGAALMDEATRTTSIKNNPAALLAMCWYWASNGVGSKDMVVLPYKDSLLLFSRYLQQLVMESLGKEFDLDGNTVNQGLTVYGNKGSTDQHAYIQQLRDGVHNFFATFIEVLRDRPPGHDWELEPGVTCGDYLFGMLQGTRSALYANGRESISVTIQEVTPTSVGAIIALYERAVGLYASIVNINAYHQPGVEAGKKAAAEVLALQKRVLSVLNEATCKDPVEPLTLEEIADRCHAPEEIEMIYKIIAHMSANDRVLIAEGNCGSPRSIKVYLGECNVDDLYA.

Over residues 1–14 (MASLSGLYSSSPSL) the composition is skewed to low complexity. The tract at residues 1 to 21 (MASLSGLYSSSPSLKPAKNHS) is disordered. A chloroplast-targeting transit peptide spans 1–48 (MASLSGLYSSSPSLKPAKNHSFKALPAQSRDSFSFPHTSKPTNLPLTL). Catalysis depends on Glu392, which acts as the Proton donor. Residues His421 and Lys526 contribute to the active site. Ser595 is modified (phosphoserine).

Belongs to the GPI family.

Its subcellular location is the plastid. The protein localises to the chloroplast stroma. The enzyme catalyses alpha-D-glucose 6-phosphate = beta-D-fructose 6-phosphate. It participates in carbohydrate degradation; glycolysis; D-glyceraldehyde 3-phosphate and glycerone phosphate from D-glucose: step 2/4. The protein operates within carbohydrate biosynthesis; gluconeogenesis. Its activity is regulated as follows. Inhibited by glycerol-3-P (G3P). Promotes the synthesis of starch in leaves. This is Glucose-6-phosphate isomerase 1, chloroplastic (PGI1) from Arabidopsis thaliana (Mouse-ear cress).